The following is a 355-amino-acid chain: D-alanine--D-alanine ligase (355 aa).

In terms of domain architecture, ATP-grasp spans 143–350; that stretch reads KTIFSNLKIP…IEQLVAKLVD (208 aa). 178–233 serves as a coordination point for ATP; that stretch reads IKKLNFPVFVKPSNSGSSLGISKVINKSALLKALEKAWEIDARILVEEGLETREIE. Positions 303, 317, and 319 each coordinate Mg(2+).

It belongs to the D-alanine--D-alanine ligase family. The cofactor is Mg(2+). Mn(2+) is required as a cofactor.

It is found in the cytoplasm. The catalysed reaction is 2 D-alanine + ATP = D-alanyl-D-alanine + ADP + phosphate + H(+). It participates in cell wall biogenesis; peptidoglycan biosynthesis. In terms of biological role, cell wall formation. The chain is D-alanine--D-alanine ligase from Prochlorococcus marinus (strain MIT 9312).